The following is a 328-amino-acid chain: Protein chibby homolog 2 (328 aa).

The interval 180 to 231 (NKGASSVQKDTENTTAAGEGSLGPTCQEEHDAKEESTTPTQNDTKIAPSTED) is disordered. Residues 182-195 (GASSVQKDTENTTA) show a composition bias toward polar residues. Residues 206–215 (QEEHDAKEES) are compositionally biased toward basic and acidic residues. Positions 259–307 (RESLHALQDESKFFQEEYKKLKLQLNNVKNTVSDITTQMEMLEKELIAI) form a coiled coil.

This sequence belongs to the chibby family. SPERT subfamily.

The chain is Protein chibby homolog 2 (CBY2) from Gallus gallus (Chicken).